We begin with the raw amino-acid sequence, 341 residues long: Glycerol-3-phosphate dehydrogenase [NAD(P)+] (341 aa).

NADPH-binding residues include Ser14, Phe15, Arg35, and Lys108. Residues Lys108 and Gly136 each coordinate sn-glycerol 3-phosphate. Ala140 is an NADPH binding site. Sn-glycerol 3-phosphate is bound by residues Lys191, Asp244, Ser254, Arg255, and Asn256. Residue Lys191 is the Proton acceptor of the active site. Residue Arg255 coordinates NADPH. The NADPH site is built by Val279 and Glu281.

It belongs to the NAD-dependent glycerol-3-phosphate dehydrogenase family.

It localises to the cytoplasm. The enzyme catalyses sn-glycerol 3-phosphate + NAD(+) = dihydroxyacetone phosphate + NADH + H(+). The catalysed reaction is sn-glycerol 3-phosphate + NADP(+) = dihydroxyacetone phosphate + NADPH + H(+). It functions in the pathway membrane lipid metabolism; glycerophospholipid metabolism. In terms of biological role, catalyzes the reduction of the glycolytic intermediate dihydroxyacetone phosphate (DHAP) to sn-glycerol 3-phosphate (G3P), the key precursor for phospholipid synthesis. The polypeptide is Glycerol-3-phosphate dehydrogenase [NAD(P)+] (Pseudomonas syringae pv. syringae (strain B728a)).